A 98-amino-acid chain; its full sequence is Small ribosomal subunit protein bS16 (98 aa).

Belongs to the bacterial ribosomal protein bS16 family.

The sequence is that of Small ribosomal subunit protein bS16 from Pseudothermotoga lettingae (strain ATCC BAA-301 / DSM 14385 / NBRC 107922 / TMO) (Thermotoga lettingae).